Consider the following 59-residue polypeptide: Large ribosomal subunit protein bL32c (59 aa).

It belongs to the bacterial ribosomal protein bL32 family.

The protein localises to the plastid. It is found in the chloroplast. The sequence is that of Large ribosomal subunit protein bL32c from Physcomitrium patens (Spreading-leaved earth moss).